The following is a 179-amino-acid chain: tRNA (cytidine(56)-2'-O)-methyltransferase (179 aa).

S-adenosyl-L-methionine is bound by residues Leu-82, 112 to 116 (GAEKV), and 130 to 137 (VGNQPHSE).

It belongs to the aTrm56 family. Homodimer.

The protein localises to the cytoplasm. The catalysed reaction is cytidine(56) in tRNA + S-adenosyl-L-methionine = 2'-O-methylcytidine(56) in tRNA + S-adenosyl-L-homocysteine + H(+). Specifically catalyzes the AdoMet-dependent 2'-O-ribose methylation of cytidine at position 56 in tRNAs. This chain is tRNA (cytidine(56)-2'-O)-methyltransferase, found in Methanococcus maripaludis (strain C6 / ATCC BAA-1332).